A 155-amino-acid polypeptide reads, in one-letter code: MRRRKAPVREIMPDPVYGSKVLTKFINKIMFDGKKSTAEKIIYSAMDIISSRGEKTGIDTFNEAIENIKPIIEVKSRRVGGATYQVPVEVRPVRQLSLAIRWLVDASRKRNERTMAERLANELMDASSDKGNAFKKKEDTYRMAEANKAFAHYRW.

This sequence belongs to the universal ribosomal protein uS7 family. As to quaternary structure, part of the 30S ribosomal subunit. Contacts proteins S9 and S11.

Functionally, one of the primary rRNA binding proteins, it binds directly to 16S rRNA where it nucleates assembly of the head domain of the 30S subunit. Is located at the subunit interface close to the decoding center, probably blocks exit of the E-site tRNA. This Sulfurimonas denitrificans (strain ATCC 33889 / DSM 1251) (Thiomicrospira denitrificans (strain ATCC 33889 / DSM 1251)) protein is Small ribosomal subunit protein uS7.